A 465-amino-acid chain; its full sequence is MSFLVAIVGRANVGKSTLFNVLTNSYDALVFDFEGVTRDRQYGQAKYDDLDYLVVDTGGISDKDVGFDEFMAKQSQIAIDEANLVFFVVDGRSGLTTGDEYVASLLRQKDKKVVVVVNKVDGTDEEAAMAEFYSFGFDKVFAISAAHRRNTQKLVDKFLKKTLNEYYQDYTQTQEHKEQQRHGIHFSLIGRPNVGKSTLTNRMLGEDRVVVFDMPGTTIDSVSIPFERHGQKYTIVDTAGVRKRGKVKQTLEKFSVIKTLQAIQDSNVVVAVVDARQGISDQDLSLIHFAIKNGRALVLAVNKWDGMTEEDRIQVKQDLKRKLFFLQDYVDIHFISALHGTNVGHVFESIDTAYACASKKITTADATRLMQLAVEAHSPPMVGKFRIKLKYAHVGGHNPPVIVIHGNQVSRLPNSYKRYLENFFREALDFRGTPIVFEFKQSENPFADRKNKRSKDEGSKSKKVK.

EngA-type G domains are found at residues 3–166 (FLVA…LNEY) and 184–358 (IHFS…ACAS). GTP is bound by residues 9-16 (GRANVGKS), 56-60 (DTGGI), 118-121 (NKVD), 190-197 (GRPNVGKS), 237-241 (DTAGV), and 302-305 (NKWD). One can recognise a KH-like domain in the interval 359 to 443 (KKITTADATR…PIVFEFKQSE (85 aa)). The tract at residues 446-465 (FADRKNKRSKDEGSKSKKVK) is disordered.

Belongs to the TRAFAC class TrmE-Era-EngA-EngB-Septin-like GTPase superfamily. EngA (Der) GTPase family. Associates with the 50S ribosomal subunit.

Functionally, GTPase that plays an essential role in the late steps of ribosome biogenesis. In Francisella tularensis subsp. tularensis (strain FSC 198), this protein is GTPase Der.